The chain runs to 436 residues: Testis-expressed protein 44 (436 aa).

Acidic residues-rich tracts occupy residues Met-1–Glu-10 and Leu-45–Ile-54. Disordered stretches follow at residues Met-1 to Leu-142 and Ala-165 to Gly-307. Composition is skewed to polar residues over residues Ala-81–Ser-103 and Asn-167–Glu-195. Residues Glu-234–Lys-247 show a composition bias toward basic and acidic residues. Residues Gln-273 to Pro-289 are compositionally biased toward pro residues. A Phosphoserine modification is found at Ser-375.

The protein localises to the cytoplasm. The protein is Testis-expressed protein 44 (Tex44) of Rattus norvegicus (Rat).